A 231-amino-acid polypeptide reads, in one-letter code: 4-aminobenzoate synthase (231 aa).

Fe(2+) is bound by residues Glu-81, His-88, Glu-142, His-174, Asp-178, and His-181.

This sequence belongs to the CADD family. Homodimer. During infection, interacts with death domains of mammalian tumor necrosis factor (TNF) family receptors Fas, DR4, DR5 and to some extent TNFR1, but not with the respective downstream adapters. It depends on Fe(2+) as a cofactor. Mn(2+) is required as a cofactor.

It is found in the secreted. Its subcellular location is the host cytoplasm. Its activity is regulated as follows. The protein is a cosubstrate rather than a true enzyme and is left in an inactive state after a single turnover. Inactive under anaerobic conditions. In terms of biological role, involved in de novo para-aminobenzoate (PABA) biosynthesis. Acts as a self-sacrificing or 'suicide' enzyme that utilizes its own active site tyrosine residue(s) as the substrate for PABA synthesis. The side chain of the tyrosine residue is released from the protein backbone via cleavage of the C(alpha)-C(beta) bond, leaving a glycine in place of the original tyrosine residue. Reaction requires O(2) and a reduced dimetal cofactor. Functionally, was also identified as a specific toxin that associates with death domains of tumor necrosis factor family (TNF) receptors and induces apoptosis in mammalian cell lines through a Caspase-dependent mechanism. In Chlamydia trachomatis serovar D (strain ATCC VR-885 / DSM 19411 / UW-3/Cx), this protein is 4-aminobenzoate synthase.